Reading from the N-terminus, the 196-residue chain is Nodulation protein A (196 aa).

This sequence belongs to the NodA family.

The protein localises to the cytoplasm. N-acyltransferase required for nodulation. Acts in the production of a small, heat-stable compound (Nod) that stimulates mitosis in various plant protoplasts. The chain is Nodulation protein A from Mesorhizobium plurifarium.